A 469-amino-acid polypeptide reads, in one-letter code: RuvB-like helicase 2 (469 aa).

73 to 80 (GEPGTGKT) is a binding site for ATP.

The protein belongs to the RuvB family. Forms homohexameric rings. May form a dodecamer with rvb1 made of two stacked hexameric rings. Component of the chromatin remodeling Ino80 complex. Component of the RNA polymerase II holoenzyme complex.

It localises to the nucleus. It carries out the reaction ATP + H2O = ADP + phosphate + H(+). Has double-stranded DNA-stimulated ATPase and ATP-dependent DNA helicase (5' to 3') activity suggesting a role in nuclear processes such as recombination and transcription. Its function is as follows. Proposed core component of the chromatin remodeling Ino80 complex which is involved in transcriptional regulation, DNA replication and probably DNA repair. This Dictyostelium discoideum (Social amoeba) protein is RuvB-like helicase 2 (rvb2).